We begin with the raw amino-acid sequence, 49 residues long: Large ribosomal subunit protein bL36 (49 aa).

It belongs to the bacterial ribosomal protein bL36 family.

The polypeptide is Large ribosomal subunit protein bL36 (Delftia acidovorans (strain DSM 14801 / SPH-1)).